The sequence spans 171 residues: T-cell surface glycoprotein CD3 delta chain (171 aa).

An N-terminal signal peptide occupies residues 1 to 21; it reads MEHSTFLSGLVLATLLSQVSP. The Extracellular segment spans residues 22 to 105; that stretch reads FKIPIEELED…CVELDPATVA (84 aa). An intrachain disulfide couples cysteine 37 to cysteine 73. N-linked (GlcNAc...) asparagine glycans are attached at residues asparagine 38 and asparagine 74. Residues 106-126 form a helical membrane-spanning segment; sequence GIIVTDVIATLLLALGVFCFA. Residues 127–171 lie on the Cytoplasmic side of the membrane; that stretch reads GHETGRLSGAADTQALLRNDQVYQPLRDRDDAQYSHLGGNWARNK. In terms of domain architecture, ITAM spans 138–166; the sequence is DTQALLRNDQVYQPLRDRDDAQYSHLGGN. Phosphotyrosine is present on residues tyrosine 149 and tyrosine 160.

The TCR-CD3 complex is composed of a CD3D/CD3E and a CD3G/CD3E heterodimers that preferentially associate with TCRalpha and TCRbeta, respectively, to form TCRalpha/CD3E/CD3G and TCRbeta/CD3G/CD3E trimers. In turn, the hexamer interacts with CD3Z homodimer to form the TCR-CD3 complex. Alternatively, TCRalpha and TCRbeta can be replaced by TCRgamma and TCRdelta. Interacts with coreceptors CD4 and CD8. In terms of processing, phosphorylated on Tyr residues after T-cell receptor triggering by LCK in association with CD4/CD8. As to expression, CD3D is mostly present on T-lymphocytes with its TCR-CD3 partners. Present also in fetal NK-cells.

Its subcellular location is the cell membrane. Functionally, part of the TCR-CD3 complex present on T-lymphocyte cell surface that plays an essential role in adaptive immune response. When antigen presenting cells (APCs) activate T-cell receptor (TCR), TCR-mediated signals are transmitted across the cell membrane by the CD3 chains CD3D, CD3E, CD3G and CD3Z. All CD3 chains contain immunoreceptor tyrosine-based activation motifs (ITAMs) in their cytoplasmic domain. Upon TCR engagement, these motifs become phosphorylated by Src family protein tyrosine kinases LCK and FYN, resulting in the activation of downstream signaling pathways. In addition of this role of signal transduction in T-cell activation, CD3D plays an essential role in thymocyte differentiation. Indeed, participates in correct intracellular TCR-CD3 complex assembly and surface expression. In absence of a functional TCR-CD3 complex, thymocytes are unable to differentiate properly. Interacts with CD4 and CD8 and thus serves to establish a functional link between the TCR and coreceptors CD4 and CD8, which is needed for activation and positive selection of CD4 or CD8 T-cells. The sequence is that of T-cell surface glycoprotein CD3 delta chain (CD3D) from Homo sapiens (Human).